We begin with the raw amino-acid sequence, 245 residues long: DNA polymerase sliding clamp (245 aa).

Belongs to the PCNA family. In terms of assembly, homotrimer. The subunits circularize to form a toroid; DNA passes through its center. Replication factor C (RFC) is required to load the toroid on the DNA.

Its function is as follows. Sliding clamp subunit that acts as a moving platform for DNA processing. Responsible for tethering the catalytic subunit of DNA polymerase and other proteins to DNA during high-speed replication. The protein is DNA polymerase sliding clamp of Picrophilus torridus (strain ATCC 700027 / DSM 9790 / JCM 10055 / NBRC 100828 / KAW 2/3).